The chain runs to 841 residues: MKNVTIKSFSEEIKIPINKLIQKFADAGITKTNIDYVSLEEKKILLSYINSHHVNLPKNLSLQKKTKSKLNISSLNGKNKIVKIEVRKKKYLKCDSSLLFKDKIVKNNIDKTFCKKNIKDLNKTKKYVELSKNINEREINFEKKLIKEPILDKSKLKISKNLIKKNVKINKNLNIYKKNEFKQNLKKNKLNKKEKNKKIEINYKVKNKNENIFKKIKSNRLFGSETNFFNNNIDKKTNIRKKISSLTHTFNKPLKKIIKEITIGETISVFELSNKMAVKSHKVVSNMMKLGIKSSINEVIDQDIAQIIAEEMGHKVKLIKNNALEEEIIKNQNKNLYELKNRAPVVTIMGHVDHGKTSLLDYIRTTKVALKEKGGITQCIGAYYVKTKKGIITFIDTPGHAAFTEMRIRGSKITDIIVIVIAADDSIMPQTVEAINHAKIAKVPVIIAINKIDKITSNPEKVKKELIKHGIFLEEYGGDTQCLLISAKSGLGIDFLLDAILLQAEILELKAMHKGMASGTVIESRLEKGKGPVSTILIQEGRLHQGDVVLCGCEYGKIKAMQDSFKCKIKSVGPSIPVEILGLSGIPISGDKITVVKEEKKAREVAIYRQNKLRESKLRINKKIKIENVFSNLNLSTKKNINIVLKSDAHGSSQAISNALILLSNEEIKINIIYSGVGPITETDVALATSSNAIIIGFNVKPDFSNIKNTESIGLNIKCCSIIYEIVDFVKQKIYLSCNTKYNKKIIGILIVKNIFQLPKLGSIAGCIVKEGIVKKNSIAKILRNKSFVHESKIISLRRFKEDVNEVKSGTECGIVIKNFNDIKPLDIIEILELEELNKKI.

Residues 341 to 508 form the tr-type G domain; the sequence is NRAPVVTIMG…AILLQAEILE (168 aa). Residues 350-357 are G1; it reads GHVDHGKT. 350–357 contacts GTP; that stretch reads GHVDHGKT. Positions 375-379 are G2; that stretch reads GITQC. Positions 396–399 are G3; it reads DTPG. Residues 396–400 and 450–453 contribute to the GTP site; these read DTPGH and NKID. The G4 stretch occupies residues 450–453; that stretch reads NKID. Residues 486-488 are G5; that stretch reads SAK.

It belongs to the TRAFAC class translation factor GTPase superfamily. Classic translation factor GTPase family. IF-2 subfamily.

Its subcellular location is the cytoplasm. In terms of biological role, one of the essential components for the initiation of protein synthesis. Protects formylmethionyl-tRNA from spontaneous hydrolysis and promotes its binding to the 30S ribosomal subunits. Also involved in the hydrolysis of GTP during the formation of the 70S ribosomal complex. This chain is Translation initiation factor IF-2, found in Wigglesworthia glossinidia brevipalpis.